The primary structure comprises 245 residues: GTP cyclohydrolase 1 type 2 homolog (245 aa).

Residues His63, His64, Asp100, His213, and Glu217 each contribute to the a divalent metal cation site.

It belongs to the GTP cyclohydrolase I type 2/NIF3 family. As to quaternary structure, homohexamer.

The protein is GTP cyclohydrolase 1 type 2 homolog of Archaeoglobus fulgidus (strain ATCC 49558 / DSM 4304 / JCM 9628 / NBRC 100126 / VC-16).